Consider the following 386-residue polypeptide: Branched-chain-amino-acid aminotransferase, cytosolic (386 aa).

M1 is modified (N-acetylmethionine). Residue K222 is modified to N6-(pyridoxal phosphate)lysine.

Belongs to the class-IV pyridoxal-phosphate-dependent aminotransferase family. Homodimer. It depends on pyridoxal 5'-phosphate as a cofactor. Expressed in brain and kidney. Overexpressed in MYC-induced brain tumors, lymphomas, as well as in a teratocarcinoma cell line.

The protein resides in the cytoplasm. The catalysed reaction is L-leucine + 2-oxoglutarate = 4-methyl-2-oxopentanoate + L-glutamate. The enzyme catalyses L-isoleucine + 2-oxoglutarate = (S)-3-methyl-2-oxopentanoate + L-glutamate. It carries out the reaction L-valine + 2-oxoglutarate = 3-methyl-2-oxobutanoate + L-glutamate. Its function is as follows. Catalyzes the first reaction in the catabolism of the essential branched chain amino acids leucine, isoleucine, and valine. The sequence is that of Branched-chain-amino-acid aminotransferase, cytosolic (Bcat1) from Mus musculus (Mouse).